Here is a 388-residue protein sequence, read N- to C-terminus: Putative F-box/kelch-repeat protein At2g29820 (388 aa).

The tract at residues 6–33 is disordered; that stretch reads EILDGPNGDDPNNNPQEGEDNQNENPQE. A compositionally biased stretch (low complexity) spans 9–21; that stretch reads DGPNGDDPNNNPQ. Residues 22–33 show a composition bias toward acidic residues; the sequence is EGEDNQNENPQE. In terms of domain architecture, F-box spans 38–84; sequence LRNLLELPEELIERLIAHIPRCYYPYISLVSRDFRQVITSDKLFRTR. 2 Kelch repeats span residues 140 to 187 and 189 to 233; these read KMYV…EIGG and IYVI…FSTY.

The chain is Putative F-box/kelch-repeat protein At2g29820 from Arabidopsis thaliana (Mouse-ear cress).